The chain runs to 231 residues: Endonuclease NucS (231 aa).

Belongs to the NucS endonuclease family.

It is found in the cytoplasm. In terms of biological role, cleaves both 3' and 5' ssDNA extremities of branched DNA structures. The sequence is that of Endonuclease NucS from Micrococcus luteus (strain ATCC 4698 / DSM 20030 / JCM 1464 / CCM 169 / CCUG 5858 / IAM 1056 / NBRC 3333 / NCIMB 9278 / NCTC 2665 / VKM Ac-2230) (Micrococcus lysodeikticus).